Here is a 427-residue protein sequence, read N- to C-terminus: Serine--tRNA ligase (427 aa).

236-238 (TAE) is a binding site for L-serine. 267–269 (RRE) serves as a coordination point for ATP. E290 lines the L-serine pocket. Residue 354-357 (EISS) participates in ATP binding. S390 serves as a coordination point for L-serine.

This sequence belongs to the class-II aminoacyl-tRNA synthetase family. Type-1 seryl-tRNA synthetase subfamily. As to quaternary structure, homodimer. The tRNA molecule binds across the dimer.

Its subcellular location is the cytoplasm. It carries out the reaction tRNA(Ser) + L-serine + ATP = L-seryl-tRNA(Ser) + AMP + diphosphate + H(+). It catalyses the reaction tRNA(Sec) + L-serine + ATP = L-seryl-tRNA(Sec) + AMP + diphosphate + H(+). Its pathway is aminoacyl-tRNA biosynthesis; selenocysteinyl-tRNA(Sec) biosynthesis; L-seryl-tRNA(Sec) from L-serine and tRNA(Sec): step 1/1. Its function is as follows. Catalyzes the attachment of serine to tRNA(Ser). Is also able to aminoacylate tRNA(Sec) with serine, to form the misacylated tRNA L-seryl-tRNA(Sec), which will be further converted into selenocysteinyl-tRNA(Sec). This is Serine--tRNA ligase from Rippkaea orientalis (strain PCC 8801 / RF-1) (Cyanothece sp. (strain PCC 8801)).